Reading from the N-terminus, the 160-residue chain is Bcl-2-like gene 16 protein (160 aa).

Residues 64 to 84 (LLTTEHTTNWGKVVAMLSFSA) carry the BH1 motif.

The protein belongs to the Bcl-2 family.

The polypeptide is Bcl-2-like gene 16 protein (16) (Saimiri sciureus (Common squirrel monkey)).